Here is a 187-residue protein sequence, read N- to C-terminus: uncharacterized protein (187 aa).

Over residues 139–168 (ESKDRKALKNAARKAEKNAHEESSYFRVDD) the composition is skewed to basic and acidic residues. The tract at residues 139–172 (ESKDRKALKNAARKAEKNAHEESSYFRVDDPEPE) is disordered.

This is an uncharacterized protein from Caenorhabditis elegans.